The following is a 417-amino-acid chain: Probable glucuronosyltransferase GUT1 (417 aa).

The Cytoplasmic portion of the chain corresponds to 1-15 (MGTRRRSARARARPP). Residues 16–36 (LAMPLAVLLLFACSSGVAAAA) form a helical; Signal-anchor for type II membrane protein membrane-spanning segment. Residues 37-417 (AQGIERIKDD…EGTREDLKPW (381 aa)) are Lumenal-facing. Residues Asn-144 and Asn-405 are each glycosylated (N-linked (GlcNAc...) asparagine).

It belongs to the glycosyltransferase 47 family.

Its subcellular location is the golgi apparatus membrane. In terms of biological role, involved in the synthesis of glucuronoxylan hemicellulose in secondary cell walls. This chain is Probable glucuronosyltransferase GUT1 (GUT1), found in Oryza sativa subsp. japonica (Rice).